Here is a 374-residue protein sequence, read N- to C-terminus: 5-methylthioribulose-1-phosphate isomerase (374 aa).

It belongs to the RuBisCO large chain family. Type IV subfamily.

The catalysed reaction is 5-(methylsulfanyl)-D-ribulose 1-phosphate = S-methyl-1-thio-D-xylulose 5-phosphate. It carries out the reaction 5-(methylsulfanyl)-D-ribulose 1-phosphate = 1-(methylsulfanyl)ribulose 5-phosphate. Its pathway is amino-acid biosynthesis; L-methionine biosynthesis via salvage pathway. It participates in metabolic intermediate biosynthesis; 1-deoxy-D-xylulose 5-phosphate biosynthesis. Catalyzes the conversion of 5-methylthio-D-ribulose 1-phosphate (MTRu-1P) to a 3:1 mixture of 1-methylthioxylulose 5-phosphate (MTXu-5P) and 1-methylthioribulose 5-phosphate (MTRu-5P). Involved in the MTA-isoprenoid shunt of the methionine salvage pathway. The protein is 5-methylthioribulose-1-phosphate isomerase of Rhodospirillum rubrum (strain ATCC 11170 / ATH 1.1.1 / DSM 467 / LMG 4362 / NCIMB 8255 / S1).